The following is a 368-amino-acid chain: MKRVGLIGWRGMVGSVLMQRMLEERDFDLIEPVFFTTSSVGGQGAIGKETVPLKDAYSIEELKSLDAIITCQGGDYTSEVFPKLRDAGWQGYWIDAASSLRMADDAVIVLDPVNRRVIDQSLDAGVKNYIGGNCTVSLMLMALGRLRGRPGRLDERHDLSGRFRAGAQNMRELIRQMGTINAAVAAEPADPASAILEIDRKGPETQRSAEFPVDHFGVPLAGSLIPYIDKELPNGQSREEWKGQAETNKILGRIKNPIPVDGICVRVGAMRCHSQALTIKLNKDVPIADIEGLISQHNPWVKLVPNHREASMQELSPAAITGTLTVPVGRLRKLNMGSQYLGAFTVGDQLLWGAAEPVRRMLLILLER.

NADP(+) contacts are provided by residues 10 to 13 (RGMV), 37 to 38 (TS), and glutamine 72. A phosphate-binding site is contributed by arginine 101. Catalysis depends on cysteine 134, which acts as the Acyl-thioester intermediate. NADP(+) is bound by residues 160–161 (SG) and proline 191. Glutamate 239 is a binding site for substrate. Lysine 242 contacts phosphate. Arginine 266 contributes to the substrate binding site. The Proton acceptor role is filled by histidine 273. Glutamine 349 lines the NADP(+) pocket.

Belongs to the aspartate-semialdehyde dehydrogenase family. In terms of assembly, homodimer.

It carries out the reaction L-aspartate 4-semialdehyde + phosphate + NADP(+) = 4-phospho-L-aspartate + NADPH + H(+). Its pathway is amino-acid biosynthesis; L-lysine biosynthesis via DAP pathway; (S)-tetrahydrodipicolinate from L-aspartate: step 2/4. It participates in amino-acid biosynthesis; L-methionine biosynthesis via de novo pathway; L-homoserine from L-aspartate: step 2/3. It functions in the pathway amino-acid biosynthesis; L-threonine biosynthesis; L-threonine from L-aspartate: step 2/5. In terms of biological role, catalyzes the NADPH-dependent formation of L-aspartate-semialdehyde (L-ASA) by the reductive dephosphorylation of L-aspartyl-4-phosphate. This Azotobacter vinelandii protein is Aspartate-semialdehyde dehydrogenase.